The sequence spans 347 residues: GMP reductase (347 aa).

An NADP(+)-binding site is contributed by 108-131 (ADFDKMKQILALSPALKFICIDVA). K(+) is bound by residues glycine 181 and glycine 183. Catalysis depends on cysteine 186, which acts as the Thioimidate intermediate. 216–239 (IVSDGGCSVPGDVAKAFGGGADFV) is a binding site for NADP(+).

It belongs to the IMPDH/GMPR family. GuaC type 1 subfamily. Homotetramer.

It carries out the reaction IMP + NH4(+) + NADP(+) = GMP + NADPH + 2 H(+). Functionally, catalyzes the irreversible NADPH-dependent deamination of GMP to IMP. It functions in the conversion of nucleobase, nucleoside and nucleotide derivatives of G to A nucleotides, and in maintaining the intracellular balance of A and G nucleotides. This chain is GMP reductase, found in Yersinia enterocolitica serotype O:8 / biotype 1B (strain NCTC 13174 / 8081).